A 470-amino-acid chain; its full sequence is UDP-N-acetylmuramate--L-alanine ligase (470 aa).

114-120 (GTHGKTT) lines the ATP pocket.

This sequence belongs to the MurCDEF family.

The protein resides in the cytoplasm. It catalyses the reaction UDP-N-acetyl-alpha-D-muramate + L-alanine + ATP = UDP-N-acetyl-alpha-D-muramoyl-L-alanine + ADP + phosphate + H(+). It functions in the pathway cell wall biogenesis; peptidoglycan biosynthesis. Its function is as follows. Cell wall formation. The chain is UDP-N-acetylmuramate--L-alanine ligase from Xanthobacter autotrophicus (strain ATCC BAA-1158 / Py2).